The sequence spans 367 residues: MTARIRVAVVYGGRSSEHAISCVSAGSILRNLDPQRFEVVPVGITPEGSWVLTDGRPETLAITDGALPGVSGSSGTELALAADPGRRGQLLSLGDAAGDVLAAVDVVFPVLHGPYGEDGTIQGLLELAGVPYVGAGVLASAAGMDKEFTKKLLTAAGLPVGDHVVLRPREATVSLEDRERLGLPVFVKPSRGGSSIGVSRVTAWDALPAAIELARRHDPKVIVEAAIPGRELECGVLEFPDGHLEASTVGEIRVAGVRGREDGFYDFETKYLDDGAELDVPAKVDDAIAEAVRGLAIRAFDAIDCQGLARVDFFLTDAGPVINEINTMPGFTTISMYPRMWAASGIDYPTLLATMVETAIARGTGLR.

One can recognise an ATP-grasp domain in the interval 150–357; that stretch reads KKLLTAAGLP…YPTLLATMVE (208 aa). 178–233 lines the ATP pocket; sequence RERLGLPVFVKPSRGGSSIGVSRVTAWDALPAAIELARRHDPKVIVEAAIPGRELE. Mg(2+) is bound by residues Asp-312, Glu-324, and Asn-326.

The protein belongs to the D-alanine--D-alanine ligase family. The cofactor is Mg(2+). Requires Mn(2+) as cofactor.

Its subcellular location is the cytoplasm. It catalyses the reaction 2 D-alanine + ATP = D-alanyl-D-alanine + ADP + phosphate + H(+). It participates in cell wall biogenesis; peptidoglycan biosynthesis. In terms of biological role, cell wall formation. The chain is D-alanine--D-alanine ligase from Mycolicibacterium vanbaalenii (strain DSM 7251 / JCM 13017 / BCRC 16820 / KCTC 9966 / NRRL B-24157 / PYR-1) (Mycobacterium vanbaalenii).